A 221-amino-acid chain; its full sequence is uncharacterized protein (221 aa).

Positions 1–30 (MVPPNPAHQPARRTQPQLQPQSQPRAQPLP) are disordered. Residues 12–25 (RRTQPQLQPQSQPR) show a composition bias toward polar residues. A helical membrane pass occupies residues 37–57 (VLCIIVALVLLGLLVGLAILI).

The protein resides in the membrane. This is an uncharacterized protein from Arabidopsis thaliana (Mouse-ear cress).